The chain runs to 326 residues: F-box/LRR-repeat protein 12 (326 aa).

An F-box domain is found at 1 to 47 (MATFADLPDSVLLEIFSYLPVRDRIRISRVCHHWKKLVDDRWLWRHV). 7 LRR repeats span residues 51–78 (LYTMRPKVMWHLLRRYMASRLHSLRMGG), 86–111 (APQLSPALMRALGQKCPNLKRLCLHV), 161–185 (VPAFRDEHLQGLTRFRALRSLVLGG), 186–211 (TYRVTETGLDMGLQELNYLQRLEVLG), 212–236 (CTLSADSTLLAISRHLRDVRKIRLT), 237–261 (VRGLSAPGLSVLEGMPALESLCLLG), and 266–291 (PEMPSPQEILASCLTMPKLRVLELQG).

As to quaternary structure, interacts with SKP1 and CUL1.

It participates in protein modification; protein ubiquitination. Its function is as follows. Substrate-recognition component of the SCF (SKP1-CUL1-F-box protein)-type E3 ubiquitin ligase complex. Mediates the polyubiquitination and proteasomal degradation of CAMK1 leading to disruption of cyclin D1/CDK4 complex assembly which results in G1 cell cycle arrest in lung epithelia. The protein is F-box/LRR-repeat protein 12 (FBXL12) of Bos taurus (Bovine).